Here is a 216-residue protein sequence, read N- to C-terminus: uncharacterized protein (216 aa).

Positions methionine 1–lysine 216 constitute an N-acetyltransferase domain.

This sequence belongs to the acetyltransferase family.

This is an uncharacterized protein from Dictyostelium discoideum (Social amoeba).